Reading from the N-terminus, the 293-residue chain is Fructokinase (293 aa).

An ATP-binding site is contributed by T133. Zn(2+) is bound by residues H156, C174, H177, and C180. ATP-binding positions include P188 and 236–240 (GVMAQ).

It belongs to the ROK (NagC/XylR) family. Requires Mg(2+) as cofactor.

It carries out the reaction D-fructose + ATP = D-fructose 6-phosphate + ADP + H(+). Its activity is regulated as follows. Inhibition by zinc ions. The polypeptide is Fructokinase (scrK) (Streptococcus mutans serotype c (strain ATCC 700610 / UA159)).